We begin with the raw amino-acid sequence, 860 residues long: Leucine--tRNA ligase (860 aa).

A 'HIGH' region motif is present at residues 42 to 52 (PYPSGRLHMGH). A 'KMSKS' region motif is present at residues 619–623 (KMSKS). Lys-622 serves as a coordination point for ATP.

The protein belongs to the class-I aminoacyl-tRNA synthetase family.

It is found in the cytoplasm. It catalyses the reaction tRNA(Leu) + L-leucine + ATP = L-leucyl-tRNA(Leu) + AMP + diphosphate. This is Leucine--tRNA ligase from Yersinia enterocolitica serotype O:8 / biotype 1B (strain NCTC 13174 / 8081).